Here is a 166-residue protein sequence, read N- to C-terminus: uncharacterized protein (166 aa).

117 to 124 (AAKSGGKT) is an ATP binding site.

This is an uncharacterized protein from Mycoplasma pneumoniae (strain ATCC 29342 / M129 / Subtype 1) (Mycoplasmoides pneumoniae).